Reading from the N-terminus, the 570-residue chain is Sulfite reductase [NADPH] hemoprotein beta-component (570 aa).

[4Fe-4S] cluster is bound by residues Cys-434, Cys-440, Cys-479, and Cys-483. Siroheme is bound at residue Cys-483.

This sequence belongs to the nitrite and sulfite reductase 4Fe-4S domain family. In terms of assembly, alpha(8)-beta(8). The alpha component is a flavoprotein, the beta component is a hemoprotein. Siroheme serves as cofactor. It depends on [4Fe-4S] cluster as a cofactor.

The enzyme catalyses hydrogen sulfide + 3 NADP(+) + 3 H2O = sulfite + 3 NADPH + 4 H(+). It functions in the pathway sulfur metabolism; hydrogen sulfide biosynthesis; hydrogen sulfide from sulfite (NADPH route): step 1/1. Functionally, component of the sulfite reductase complex that catalyzes the 6-electron reduction of sulfite to sulfide. This is one of several activities required for the biosynthesis of L-cysteine from sulfate. The polypeptide is Sulfite reductase [NADPH] hemoprotein beta-component (Shigella flexneri serotype 5b (strain 8401)).